The primary structure comprises 270 residues: 4-hydroxy-tetrahydrodipicolinate reductase (270 aa).

NAD(+) is bound by residues 11 to 16 (GAGGRM) and Glu-37. Arg-38 contributes to the NADP(+) binding site. NAD(+) contacts are provided by residues 101–103 (GTT) and 125–128 (APNM). The Proton donor/acceptor role is filled by His-158. Residue His-159 coordinates (S)-2,3,4,5-tetrahydrodipicolinate. Residue Lys-162 is the Proton donor of the active site. Position 168–169 (168–169 (GT)) interacts with (S)-2,3,4,5-tetrahydrodipicolinate.

This sequence belongs to the DapB family.

Its subcellular location is the cytoplasm. It carries out the reaction (S)-2,3,4,5-tetrahydrodipicolinate + NAD(+) + H2O = (2S,4S)-4-hydroxy-2,3,4,5-tetrahydrodipicolinate + NADH + H(+). The enzyme catalyses (S)-2,3,4,5-tetrahydrodipicolinate + NADP(+) + H2O = (2S,4S)-4-hydroxy-2,3,4,5-tetrahydrodipicolinate + NADPH + H(+). Its pathway is amino-acid biosynthesis; L-lysine biosynthesis via DAP pathway; (S)-tetrahydrodipicolinate from L-aspartate: step 4/4. Catalyzes the conversion of 4-hydroxy-tetrahydrodipicolinate (HTPA) to tetrahydrodipicolinate. The sequence is that of 4-hydroxy-tetrahydrodipicolinate reductase from Shewanella sp. (strain MR-4).